The sequence spans 442 residues: Histidine--tRNA ligase (442 aa).

Belongs to the class-II aminoacyl-tRNA synthetase family. In terms of assembly, homodimer.

Its subcellular location is the cytoplasm. The catalysed reaction is tRNA(His) + L-histidine + ATP = L-histidyl-tRNA(His) + AMP + diphosphate + H(+). This is Histidine--tRNA ligase (hisS) from Helicobacter pylori (strain J99 / ATCC 700824) (Campylobacter pylori J99).